The sequence spans 149 residues: Nucleoside diphosphate kinase (149 aa).

Residues lysine 9, phenylalanine 57, arginine 85, threonine 91, arginine 102, and asparagine 112 each contribute to the ATP site. Histidine 115 acts as the Pros-phosphohistidine intermediate in catalysis.

This sequence belongs to the NDK family. As to quaternary structure, homotetramer. The cofactor is Mg(2+).

It localises to the cytoplasm. It catalyses the reaction a 2'-deoxyribonucleoside 5'-diphosphate + ATP = a 2'-deoxyribonucleoside 5'-triphosphate + ADP. The enzyme catalyses a ribonucleoside 5'-diphosphate + ATP = a ribonucleoside 5'-triphosphate + ADP. Functionally, major role in the synthesis of nucleoside triphosphates other than ATP. The ATP gamma phosphate is transferred to the NDP beta phosphate via a ping-pong mechanism, using a phosphorylated active-site intermediate. This is Nucleoside diphosphate kinase from Gloeobacter violaceus (strain ATCC 29082 / PCC 7421).